A 460-amino-acid polypeptide reads, in one-letter code: Cysteine--tRNA ligase (460 aa).

Cys-28 is a Zn(2+) binding site. The short motif at 30–40 is the 'HIGH' region element; sequence VTIYDLCHIGH. Residues Cys-209, His-234, and Glu-238 each contribute to the Zn(2+) site. The short motif at 266 to 270 is the 'KMSKS' region element; it reads KMSKS. Residue Lys-269 coordinates ATP.

Belongs to the class-I aminoacyl-tRNA synthetase family. In terms of assembly, monomer. Zn(2+) serves as cofactor.

The protein resides in the cytoplasm. The enzyme catalyses tRNA(Cys) + L-cysteine + ATP = L-cysteinyl-tRNA(Cys) + AMP + diphosphate. The sequence is that of Cysteine--tRNA ligase from Vibrio parahaemolyticus serotype O3:K6 (strain RIMD 2210633).